The sequence spans 126 residues: Aspartate 1-decarboxylase (126 aa).

Catalysis depends on Ser-25, which acts as the Schiff-base intermediate with substrate; via pyruvic acid. Ser-25 carries the post-translational modification Pyruvic acid (Ser). Thr-57 is a substrate binding site. The active-site Proton donor is the Tyr-58. A substrate-binding site is contributed by 73–75 (GAA).

It belongs to the PanD family. Heterooctamer of four alpha and four beta subunits. Requires pyruvate as cofactor. Post-translationally, is synthesized initially as an inactive proenzyme, which is activated by self-cleavage at a specific serine bond to produce a beta-subunit with a hydroxyl group at its C-terminus and an alpha-subunit with a pyruvoyl group at its N-terminus.

It localises to the cytoplasm. It carries out the reaction L-aspartate + H(+) = beta-alanine + CO2. It functions in the pathway cofactor biosynthesis; (R)-pantothenate biosynthesis; beta-alanine from L-aspartate: step 1/1. Its function is as follows. Catalyzes the pyruvoyl-dependent decarboxylation of aspartate to produce beta-alanine. This is Aspartate 1-decarboxylase from Marinomonas sp. (strain MWYL1).